A 63-amino-acid polypeptide reads, in one-letter code: Parvalbumin alpha (63 aa).

EF-hand domains lie at I28–K38 and V39–E63. E29, E32, D45, D47, D49, K51, and E56 together coordinate Ca(2+).

As to expression, detected in muscle and cutaneous mucus. In the skin, detected in cells in the basal region of the glandular epithelium of the dermal mucus glands (at protein level).

The protein resides in the cytoplasm. It is found in the secreted. In terms of biological role, in muscle, parvalbumin is thought to be involved in relaxation after contraction. It binds two calcium ions. The chain is Parvalbumin alpha from Rana temporaria (European common frog).